Reading from the N-terminus, the 301-residue chain is Large ribosomal subunit protein uL18z (301 aa).

The protein belongs to the universal ribosomal protein uL18 family. Component of the large ribosomal subunit (LSU). In terms of tissue distribution, expressed in seedlings, roots, stems, leaves, inflorescences and siliques.

The protein resides in the cytoplasm. It localises to the nucleus. Its subcellular location is the nucleolus. The protein localises to the nucleoplasm. Its function is as follows. Component of the ribosome, a large ribonucleoprotein complex responsible for the synthesis of proteins in the cell. The small ribosomal subunit (SSU) binds messenger RNAs (mRNAs) and translates the encoded message by selecting cognate aminoacyl-transfer RNA (tRNA) molecules. The large subunit (LSU) contains the ribosomal catalytic site termed the peptidyl transferase center (PTC), which catalyzes the formation of peptide bonds, thereby polymerizing the amino acids delivered by tRNAs into a polypeptide chain. The nascent polypeptides leave the ribosome through a tunnel in the LSU and interact with protein factors that function in enzymatic processing, targeting, and the membrane insertion of nascent chains at the exit of the ribosomal tunnel. Seems involved in the regulation of cell proliferation. Essential in leaf polarity establishment, probably having a role for translation in leaf dorsoventral patterning to specify leaf adaxial identity. The protein is Large ribosomal subunit protein uL18z of Arabidopsis thaliana (Mouse-ear cress).